We begin with the raw amino-acid sequence, 543 residues long: Hydroxylamine reductase (543 aa).

The [4Fe-4S] cluster site is built by cysteine 3, cysteine 6, cysteine 15, and cysteine 21. Hybrid [4Fe-2O-2S] cluster-binding residues include histidine 244, glutamate 268, cysteine 312, cysteine 399, cysteine 427, cysteine 452, glutamate 486, and lysine 488. Cysteine 399 carries the post-translational modification Cysteine persulfide.

This sequence belongs to the HCP family. [4Fe-4S] cluster serves as cofactor. Requires hybrid [4Fe-2O-2S] cluster as cofactor.

It localises to the cytoplasm. It catalyses the reaction A + NH4(+) + H2O = hydroxylamine + AH2 + H(+). In terms of biological role, catalyzes the reduction of hydroxylamine to form NH(3) and H(2)O. This is Hydroxylamine reductase from Methanocella arvoryzae (strain DSM 22066 / NBRC 105507 / MRE50).